Reading from the N-terminus, the 94-residue chain is Ribonuclease P protein component 1 (94 aa).

Belongs to the eukaryotic/archaeal RNase P protein component 1 family. Consists of a catalytic RNA component and at least 4-5 protein subunits.

It localises to the cytoplasm. It catalyses the reaction Endonucleolytic cleavage of RNA, removing 5'-extranucleotides from tRNA precursor.. Functionally, part of ribonuclease P, a protein complex that generates mature tRNA molecules by cleaving their 5'-ends. This Thermofilum pendens (strain DSM 2475 / Hrk 5) protein is Ribonuclease P protein component 1.